The sequence spans 2281 residues: Protein Ycf2 (2281 aa).

1634–1641 is a binding site for ATP; it reads GSIGTGRS.

This sequence belongs to the Ycf2 family.

Its subcellular location is the plastid. It is found in the chloroplast stroma. Functionally, probable ATPase of unknown function. Its presence in a non-photosynthetic plant (Epifagus virginiana) and experiments in tobacco indicate that it has an essential function which is probably not related to photosynthesis. The sequence is that of Protein Ycf2 from Buxus microphylla (Littleleaf boxwood).